Consider the following 424-residue polypeptide: Elongation factor Tu, mitochondrial (424 aa).

In terms of domain architecture, tr-type G spans 36-234 (KPHVNVGTIG…VLDTKIPLPH (199 aa)). The interval 45–52 (GHVDHGKT) is G1. A GTP-binding site is contributed by 45–52 (GHVDHGKT). The segment at 86 to 90 (GITIT) is G2. The segment at 107-110 (DCPG) is G3. GTP contacts are provided by residues 107 to 111 (DCPGH) and 162 to 165 (NKMD). A G4 region spans residues 162-165 (NKMD). The tract at residues 199-201 (AAA) is G5.

This sequence belongs to the TRAFAC class translation factor GTPase superfamily. Classic translation factor GTPase family. EF-Tu/EF-1A subfamily.

Its subcellular location is the mitochondrion. Functionally, this protein promotes the GTP-dependent binding of aminoacyl-tRNA to the A-site of ribosomes during protein biosynthesis. The sequence is that of Elongation factor Tu, mitochondrial (tufm) from Dictyostelium discoideum (Social amoeba).